The primary structure comprises 839 residues: Mitochondrial 15S rRNA processing factor CCM1 (839 aa).

A mitochondrion-targeting transit peptide spans 1–59 (MLSLKSRGSWNVLRWIQVPRRTAVIPAKPSPMRRKRRRIKNVSSKDLDLRGIDPQDSRA). PPR repeat units lie at residues 313-347 (NRENYTTVIQFYVKFGVSKQAWDVFDTMKFLSSSH) and 350-384 (DVTTYNSVLHLCNRERDYAKAIDLYEEMLDRQLQP).

It belongs to the CCM1 family. As to quaternary structure, binds to mitochondrial small subunit 15S rRNA.

The protein resides in the mitochondrion. In terms of biological role, regulates mitochondrial small subunit maturation by controlling 15S rRNA 5'-end processing. Localizes to the 5' precursor of the 15S rRNA in a position that is subsequently occupied by mS47 in the mature yeast mtSSU. Uses structure and sequence-specific RNA recognition, binding to a single-stranded region of the precursor and specifically recognizing bases -6 to -1. The exchange of Ccm1 for mS47 is coupled to the irreversible removal of precursor rRNA that is accompanied by conformational changes of the mitoribosomal proteins uS5m and mS26. These conformational changes signal completion of 5'-end rRNA processing through protection of the mature 5'-end of the 15S rRNA and stabilization of mS47. The removal of the 5' precursor together with the dissociation of Ccm1 may be catalyzed by the 5'-3' exoribonuclease Pet127. Involved in the specific removal of group I introns in mitochondrial encoded transcripts. The polypeptide is Mitochondrial 15S rRNA processing factor CCM1 (CCM1) (Zygosaccharomyces rouxii (strain ATCC 2623 / CBS 732 / NBRC 1130 / NCYC 568 / NRRL Y-229)).